Consider the following 493-residue polypeptide: Transcript termination protein A18 (493 aa).

Residues 100 to 256 (MIESKRPLYI…NSIINIAKLS (157 aa)) enclose the Helicase ATP-binding domain. 113–120 (LACGFGKT) is a binding site for ATP. A DESH box motif is present at residues 206–209 (DESH).

This sequence belongs to the helicase family. Poxviruses subfamily. As to quaternary structure, interacts with G2. Might be part of a transcription complex composed at least of G2, A18, and H5.

It is found in the virion. DNA helicase which seems to act as a postreplicative transcription termination factor. Involved in ATP-dependent release of nascent RNA. Forms a stable complex with single-stranded DNA, and to a lesser extent RNA. This chain is Transcript termination protein A18, found in Rabbitpox virus (strain Utrecht) (RPV).